A 402-amino-acid chain; its full sequence is Homoserine O-acetyltransferase (402 aa).

The 322-residue stretch at Asn38–Pro359 folds into the AB hydrolase-1 domain. Ser146 (nucleophile) is an active-site residue. Position 217 (Arg217) interacts with substrate. Residues Asp319 and His352 contribute to the active site. A substrate-binding site is contributed by Asp353.

This sequence belongs to the AB hydrolase superfamily. MetX family. In terms of assembly, homodimer.

The protein resides in the cytoplasm. It carries out the reaction L-homoserine + acetyl-CoA = O-acetyl-L-homoserine + CoA. Its pathway is amino-acid biosynthesis; L-methionine biosynthesis via de novo pathway; O-acetyl-L-homoserine from L-homoserine: step 1/1. Transfers an acetyl group from acetyl-CoA to L-homoserine, forming acetyl-L-homoserine. In Haloarcula marismortui (strain ATCC 43049 / DSM 3752 / JCM 8966 / VKM B-1809) (Halobacterium marismortui), this protein is Homoserine O-acetyltransferase.